The following is a 91-amino-acid chain: Sec-independent protein translocase protein TatA (91 aa).

The chain crosses the membrane as a helical span at residues 1–21 (MGIFDWKHWIVILIVVVLVFG). Positions 41–91 (KAMNDDDKPAEQPAPQPQQAQPAPQGSPLNQPHTIDAQAHKVDEPIRKDQV) are disordered. The span at 51-64 (EQPAPQPQQAQPAP) shows a compositional bias: low complexity. Residues 78 to 91 (QAHKVDEPIRKDQV) are compositionally biased toward basic and acidic residues.

Belongs to the TatA/E family. In terms of assembly, the Tat system comprises two distinct complexes: a TatABC complex, containing multiple copies of TatA, TatB and TatC subunits, and a separate TatA complex, containing only TatA subunits. Substrates initially bind to the TatABC complex, which probably triggers association of the separate TatA complex to form the active translocon.

It is found in the cell inner membrane. Part of the twin-arginine translocation (Tat) system that transports large folded proteins containing a characteristic twin-arginine motif in their signal peptide across membranes. TatA could form the protein-conducting channel of the Tat system. The polypeptide is Sec-independent protein translocase protein TatA (Pseudomonas syringae pv. syringae (strain B728a)).